A 681-amino-acid chain; its full sequence is PAB-dependent poly(A)-specific ribonuclease subunit pan3-like (681 aa).

Residues 9–38 (FSTNIPCRNEQLYGRCPYIDKGCFFQHKNQ) form a C3H1-type zinc finger. Disordered stretches follow at residues 38–58 (QDNA…PQNS) and 82–123 (SSAS…TVSL). Low complexity predominate over residues 41–50 (APASSKPPSA). Over residues 96-106 (KSYSSALSSGK) the composition is skewed to polar residues. The residue at position 165 (Ser-165) is a Phosphoserine.

This sequence belongs to the protein kinase superfamily. PAN3 family.

It is found in the cytoplasm. Regulatory subunit of the poly(A)-nuclease (PAN) deadenylation complex. In Schizosaccharomyces pombe (strain 972 / ATCC 24843) (Fission yeast), this protein is PAB-dependent poly(A)-specific ribonuclease subunit pan3-like.